The chain runs to 888 residues: Bifunctional uridylyltransferase/uridylyl-removing enzyme (888 aa).

The segment at 1 to 338 (MIITSPLLDY…LPNYERKIEE (338 aa)) is uridylyltransferase. Residues 182–204 (EQAKRHAQHNNTESNLEPDIKNA) form a disordered region. The tract at residues 339 to 699 (INENFKLVDG…AHRQSAQDAV (361 aa)) is uridylyl-removing. The region spanning 457-579 (VDAHTLLLIR…LGDMEHLDYL (123 aa)) is the HD domain. ACT domains are found at residues 700 to 781 (QIFI…GLMQ) and 809 to 887 (MVEI…IVSQ).

It belongs to the GlnD family. Requires Mg(2+) as cofactor.

The catalysed reaction is [protein-PII]-L-tyrosine + UTP = [protein-PII]-uridylyl-L-tyrosine + diphosphate. It catalyses the reaction [protein-PII]-uridylyl-L-tyrosine + H2O = [protein-PII]-L-tyrosine + UMP + H(+). Uridylyltransferase (UTase) activity is inhibited by glutamine, while glutamine activates uridylyl-removing (UR) activity. Its function is as follows. Modifies, by uridylylation and deuridylylation, the PII regulatory proteins (GlnB and homologs), in response to the nitrogen status of the cell that GlnD senses through the glutamine level. Under low glutamine levels, catalyzes the conversion of the PII proteins and UTP to PII-UMP and PPi, while under higher glutamine levels, GlnD hydrolyzes PII-UMP to PII and UMP (deuridylylation). Thus, controls uridylylation state and activity of the PII proteins, and plays an important role in the regulation of nitrogen assimilation and metabolism. The protein is Bifunctional uridylyltransferase/uridylyl-removing enzyme of Acinetobacter baylyi (strain ATCC 33305 / BD413 / ADP1).